The following is a 372-amino-acid chain: N-methyl-L-tryptophan oxidase (372 aa).

Position 4–34 (4–34 (DLIIIGSGSVGAAAGYYATRAGLKVLMTDAH)) interacts with FAD. Residue cysteine 307 is modified to S-8alpha-FAD cysteine.

Belongs to the MSOX/MTOX family. MTOX subfamily. As to quaternary structure, monomer. It depends on FAD as a cofactor.

It carries out the reaction N(alpha)-methyl-L-tryptophan + O2 + H2O = L-tryptophan + formaldehyde + H2O2. In terms of biological role, catalyzes the oxidative demethylation of N-methyl-L-tryptophan. This chain is N-methyl-L-tryptophan oxidase, found in Salmonella newport (strain SL254).